The chain runs to 247 residues: tRNA (guanine-N(1)-)-methyltransferase (247 aa).

Residues Gly-116 and 135–140 each bind S-adenosyl-L-methionine; that span reads IGDYVL.

The protein belongs to the RNA methyltransferase TrmD family. As to quaternary structure, homodimer.

The protein localises to the cytoplasm. The enzyme catalyses guanosine(37) in tRNA + S-adenosyl-L-methionine = N(1)-methylguanosine(37) in tRNA + S-adenosyl-L-homocysteine + H(+). In terms of biological role, specifically methylates guanosine-37 in various tRNAs. This chain is tRNA (guanine-N(1)-)-methyltransferase, found in Symbiobacterium thermophilum (strain DSM 24528 / JCM 14929 / IAM 14863 / T).